The chain runs to 1036 residues: Protein P200 (1036 aa).

The tract at residues 697–727 (ETSELNTESDPSFEPEVEIQPEPEPNFDLET) is disordered. Over residues 707 to 727 (PSFEPEVEIQPEPEPNFDLET) the composition is skewed to acidic residues. Repeat copies occupy residues 718–723 (EPEPNF), 738–743 (EPEPNF), and 776–781 (EPEPNF). The tract at residues 718–781 (EPEPNFDLET…SFESEPEPNF (64 aa)) is 3 X 6 AA repeats of E-P-E-P-N-F. Disordered regions lie at residues 757-784 (FESE…FETE) and 798-845 (EAEV…ETEA). Positions 773-784 (FESEPEPNFETE) are enriched in acidic residues.

It is found in the cell projection. The protein localises to the attachment organelle. Functionally, protein cytoskeleton-associated which plays a role in gliding motility and perhaps also in mucociliary clearance. The sequence is that of Protein P200 (p200) from Mycoplasma pneumoniae (strain ATCC 29342 / M129 / Subtype 1) (Mycoplasmoides pneumoniae).